Consider the following 338-residue polypeptide: Nucleoid-associated protein PM1885 (338 aa).

It belongs to the YejK family.

It localises to the cytoplasm. Its subcellular location is the nucleoid. In Pasteurella multocida (strain Pm70), this protein is Nucleoid-associated protein PM1885.